Reading from the N-terminus, the 393-residue chain is Adaptive-response sensory kinase SasA (393 aa).

Positions 171-393 (MLAHDLRSPL…CFHFTLPVFR (223 aa)) constitute a Histidine kinase domain. A Phosphohistidine; by autocatalysis modification is found at histidine 174.

In terms of assembly, homooligomerizes. Interacts with KaiC. Participates in the KaiABC clock complex, whose core is composed of a KaiC homohexamer, 6 KaiB and up to 6 KaiA dimers. SasA and KaiB(fs) compete to bind to KaiC.

It catalyses the reaction ATP + protein L-histidine = ADP + protein N-phospho-L-histidine.. In terms of biological role, member of the two-component regulatory system SasA/RpaA involved in genome-wide circadian gene expression. One of several clock output pathways. Participates in the Kai clock protein complex, the main circadian regulator in cyanobacteria, via its interaction with KaiC. KaiC enhances the autophosphorylation activity of SasA, which then transfers its phosphate group to RpaA to activate it. In addition to its output function, recruits fold-shifted KaiB (KaiB(fs)) to KaiC to cooperatively form the KaiB(6):KaiC(6) complex (independent of SasA kinase activity). Required for robustness of the circadian rhythm of gene expression and is involved in clock output, also required for adaptation to light/dark cycles. In Gloeothece citriformis (strain PCC 7424) (Cyanothece sp. (strain PCC 7424)), this protein is Adaptive-response sensory kinase SasA.